The sequence spans 148 residues: uncharacterized protein (148 aa).

Residues 8–148 (QVMQEPELKI…DGFLTLILRN (141 aa)) form the N-acetyltransferase domain.

This sequence belongs to the acetyltransferase family.

This is an uncharacterized protein from Bacillus subtilis (strain 168).